Consider the following 254-residue polypeptide: UPF0246 protein FTF1693c (254 aa).

This sequence belongs to the UPF0246 family.

This is UPF0246 protein FTF1693c from Francisella tularensis subsp. tularensis (strain FSC 198).